The primary structure comprises 1187 residues: DENN domain and WD repeat-containing protein SCD1 (1187 aa).

Residues 19 to 179 (TVDGDLGFHG…NVPLPTPGKD (161 aa)) enclose the uDENN domain. The region spanning 199-330 (SLPQADISLQ…EFSTLRNDIL (132 aa)) is the cDENN domain. Residues 332-437 (LLHPNVVAID…ERRLSSDEKS (106 aa)) form the dDENN domain. 2 disordered regions span residues 508–536 (SGALESNGRHPPSSPPGKNTKEDNFSSME) and 765–793 (SAGLPSPRPKDVSVSDETQQPSEASGRSW). A compositionally biased stretch (basic and acidic residues) spans 526–536 (NTKEDNFSSME). The span at 779–793 (SDETQQPSEASGRSW) shows a compositional bias: polar residues. WD repeat units lie at residues 841 to 892 (GHGG…SELR), 897 to 934 (GHTGTVRAISSDRGKIVSGSDDLSVIVWDKQTTQLLEE), 937 to 975 (GHDSQVSCVKMLSGERVLTAAHDGTVKMWDVRTDMCVAT), 978 to 1017 (RCSSAILSLEYDDSTGILAAAGRDTVANIWDIRSGKQMHK), 1020 to 1057 (GHTKWIRSIRMVEDTLITGSDDWTARVWSVSRGSCDAV), 1060 to 1099 (CHAGPVQSVEYSPFDKGIITGSADGLLRFWENDEGGIKCV), 1104 to 1141 (LHSSSILSINAGENWLGIGAADNSMSLFHRPSNAGTKV), and 1152 to 1187 (RTAAVVRCVASDLERKRICSGGRNGVLRLWDATINI).

As to quaternary structure, interacts with FLS2. Expressed in roots, rosette and cauline leaves, buds and flowers.

The protein resides in the cell membrane. Its subcellular location is the cytoplasmic vesicle. It localises to the clathrin-coated vesicle. Its function is as follows. Involved in growth and development through its role in cytokinesis and polarized cell expansion. Required for plasma membrane internalization. May function in clathrin-mediated membrane trafficking, including plasma membrane endocytosis, essential to both cytokinesis and cell expansion. Acts as a negative regulator of basal resistance against bacteria. This chain is DENN domain and WD repeat-containing protein SCD1, found in Arabidopsis thaliana (Mouse-ear cress).